We begin with the raw amino-acid sequence, 200 residues long: ATP-dependent Clp protease proteolytic subunit (200 aa).

Ser102 (nucleophile) is an active-site residue. His127 is a catalytic residue.

This sequence belongs to the peptidase S14 family. In terms of assembly, fourteen ClpP subunits assemble into 2 heptameric rings which stack back to back to give a disk-like structure with a central cavity, resembling the structure of eukaryotic proteasomes.

It localises to the cytoplasm. The enzyme catalyses Hydrolysis of proteins to small peptides in the presence of ATP and magnesium. alpha-casein is the usual test substrate. In the absence of ATP, only oligopeptides shorter than five residues are hydrolyzed (such as succinyl-Leu-Tyr-|-NHMec, and Leu-Tyr-Leu-|-Tyr-Trp, in which cleavage of the -Tyr-|-Leu- and -Tyr-|-Trp bonds also occurs).. Cleaves peptides in various proteins in a process that requires ATP hydrolysis. Has a chymotrypsin-like activity. Plays a major role in the degradation of misfolded proteins. This Dehalococcoides mccartyi (strain ATCC BAA-2100 / JCM 16839 / KCTC 5957 / BAV1) protein is ATP-dependent Clp protease proteolytic subunit.